The sequence spans 212 residues: Putative protein phosphatase 2C 53 (212 aa).

Positions 1–208 (MEDRFSAITN…DDISVMLIPL (208 aa)) constitute a PPM-type phosphatase domain. Residue D199 coordinates Mn(2+).

The protein belongs to the PP2C family. The cofactor is Mg(2+). Mn(2+) serves as cofactor.

The enzyme catalyses O-phospho-L-seryl-[protein] + H2O = L-seryl-[protein] + phosphate. It carries out the reaction O-phospho-L-threonyl-[protein] + H2O = L-threonyl-[protein] + phosphate. The polypeptide is Putative protein phosphatase 2C 53 (Arabidopsis thaliana (Mouse-ear cress)).